A 479-amino-acid polypeptide reads, in one-letter code: Anaerobic nitric oxide reductase flavorubredoxin (479 aa).

The zinc metallo-hydrolase stretch occupies residues 30–210 (LRGSSYNSYL…PFSRLVTPKI (181 aa)). Residues histidine 79, glutamate 81, aspartate 83, histidine 147, aspartate 166, and histidine 227 each contribute to the Fe cation site. The Flavodoxin-like domain occupies 254–393 (ITIFYDTMSN…LCREHGREIA (140 aa)). FMN is bound by residues 260–264 (TMSNN) and 342–369 (AFGS…EMSL). The Rubredoxin-like domain maps to 423 to 474 (GPRMQCSVCQWIYDPAKGEPMQDVAPGTPWSEVPDNFLCPECSLGKDVFDEL). Residues cysteine 428, cysteine 431, cysteine 461, and cysteine 464 each contribute to the Fe cation site.

The protein in the N-terminal section; belongs to the zinc metallo-hydrolase group 3 family. As to quaternary structure, homotetramer. Requires Fe cation as cofactor. It depends on FMN as a cofactor.

It localises to the cytoplasm. The protein operates within nitrogen metabolism; nitric oxide reduction. Functionally, anaerobic nitric oxide reductase; uses NADH to detoxify nitric oxide (NO), protecting several 4Fe-4S NO-sensitive enzymes. Has at least 2 reductase partners, only one of which (NorW, flavorubredoxin reductase) has been identified. NO probably binds to the di-iron center; electrons enter from the NorW at rubredoxin and are transferred sequentially to the FMN center and the di-iron center. Also able to function as an aerobic oxygen reductase. The polypeptide is Anaerobic nitric oxide reductase flavorubredoxin (Escherichia coli O6:H1 (strain CFT073 / ATCC 700928 / UPEC)).